The primary structure comprises 386 residues: Succinate--CoA ligase [ADP-forming] subunit beta (386 aa).

Positions 9 to 244 (KEILRSYGVS…LDEEDPKEVE (236 aa)) constitute an ATP-grasp domain. ATP-binding positions include K46, 53–55 (GRG), E99, C102, and E107. Mg(2+)-binding residues include N199 and D213. Substrate contacts are provided by residues N264 and 321 to 323 (GIM).

It belongs to the succinate/malate CoA ligase beta subunit family. As to quaternary structure, heterotetramer of two alpha and two beta subunits. Mg(2+) is required as a cofactor.

The catalysed reaction is succinate + ATP + CoA = succinyl-CoA + ADP + phosphate. The enzyme catalyses GTP + succinate + CoA = succinyl-CoA + GDP + phosphate. It functions in the pathway carbohydrate metabolism; tricarboxylic acid cycle; succinate from succinyl-CoA (ligase route): step 1/1. Functionally, succinyl-CoA synthetase functions in the citric acid cycle (TCA), coupling the hydrolysis of succinyl-CoA to the synthesis of either ATP or GTP and thus represents the only step of substrate-level phosphorylation in the TCA. The beta subunit provides nucleotide specificity of the enzyme and binds the substrate succinate, while the binding sites for coenzyme A and phosphate are found in the alpha subunit. In Geobacillus thermodenitrificans (strain NG80-2), this protein is Succinate--CoA ligase [ADP-forming] subunit beta.